Here is a 210-residue protein sequence, read N- to C-terminus: uncharacterized protein (210 aa).

The protein resides in the mitochondrion. This is an uncharacterized protein from Schizosaccharomyces pombe (strain 972 / ATCC 24843) (Fission yeast).